Reading from the N-terminus, the 109-residue chain is Ribonuclease P protein component (109 aa).

The protein belongs to the RnpA family. In terms of assembly, consists of a catalytic RNA component (M1 or rnpB) and a protein subunit.

It catalyses the reaction Endonucleolytic cleavage of RNA, removing 5'-extranucleotides from tRNA precursor.. Functionally, RNaseP catalyzes the removal of the 5'-leader sequence from pre-tRNA to produce the mature 5'-terminus. It can also cleave other RNA substrates such as 4.5S RNA. The protein component plays an auxiliary but essential role in vivo by binding to the 5'-leader sequence and broadening the substrate specificity of the ribozyme. The sequence is that of Ribonuclease P protein component from Streptococcus agalactiae serotype Ia (strain ATCC 27591 / A909 / CDC SS700).